The following is a 58-amino-acid chain: Small ribosomal subunit protein bS21 (58 aa).

Positions 37 to 58 are disordered; it reads FYEKPSVKRKKKSEAARKRKKF. Over residues 43-58 the composition is skewed to basic residues; sequence VKRKKKSEAARKRKKF.

The protein belongs to the bacterial ribosomal protein bS21 family.

The protein is Small ribosomal subunit protein bS21 of Enterococcus faecalis (strain ATCC 700802 / V583).